A 463-amino-acid chain; its full sequence is Tryptophan aminotransferase-related protein 4 (463 aa).

A helical transmembrane segment spans residues 6-26 (LLLIVSIILNLVFTIHILYYS). Pyridoxal 5'-phosphate is bound by residues Tyr-124, 163–164 (TT), Asn-239, 259–262 (DYAY), 282–285 (SLSK), and Arg-293. At Lys-285 the chain carries N6-(pyridoxal phosphate)lysine.

Belongs to the alliinase family. Requires pyridoxal 5'-phosphate as cofactor.

The protein localises to the membrane. Functionally, probable aminotransferase. This Arabidopsis thaliana (Mouse-ear cress) protein is Tryptophan aminotransferase-related protein 4 (TAR4).